A 544-amino-acid chain; its full sequence is Glucose starvation modulator protein 1 (544 aa).

The segment at residues C20 to C48 is a DNA-binding region (zn(2)-C6 fungal-type). A disordered region spans residues K65–H93. The span at R70–S86 shows a compositional bias: low complexity. Residues S403–G475 enclose the PAS domain.

This sequence belongs to the ERT1/acuK family.

The protein localises to the nucleus. Transcription factor which regulates nonfermentable carbon utilization. This is Glucose starvation modulator protein 1 (GSM1) from Debaryomyces hansenii (strain ATCC 36239 / CBS 767 / BCRC 21394 / JCM 1990 / NBRC 0083 / IGC 2968) (Yeast).